A 433-amino-acid chain; its full sequence is Putative wall-associated receptor kinase-like 16 (433 aa).

An N-terminal signal peptide occupies residues 1–22; that stretch reads MKLQHVVYLVAIFFVVAIFVIA. Over 23 to 29 the chain is Extracellular; it reads CIEENKY. The chain crosses the membrane as a helical span at residues 30–50; sequence LVWIMIILANTTNILSLVRSI. The Cytoplasmic segment spans residues 51–433; sequence SYIKNIRKHQ…VARFDIEAGR (383 aa). At threonine 97 the chain carries Phosphothreonine. The 284-residue stretch at 108–391 folds into the Protein kinase domain; it reads YDVSRILGQG…RAKTTKHNWL (284 aa). ATP is bound by residues 114–122 and lysine 136; that span reads LGQGGQWTV. Tyrosine 181 carries the post-translational modification Phosphotyrosine. Aspartate 233 serves as the catalytic Proton acceptor. Phosphothreonine occurs at positions 267 and 272. At tyrosine 280 the chain carries Phosphotyrosine.

The protein belongs to the protein kinase superfamily. Ser/Thr protein kinase family.

It is found in the membrane. The catalysed reaction is L-seryl-[protein] + ATP = O-phospho-L-seryl-[protein] + ADP + H(+). It carries out the reaction L-threonyl-[protein] + ATP = O-phospho-L-threonyl-[protein] + ADP + H(+). Its function is as follows. Putative serine/threonine-protein kinase that may function as a signaling receptor of extracellular matrix component. The polypeptide is Putative wall-associated receptor kinase-like 16 (WAKL16) (Arabidopsis thaliana (Mouse-ear cress)).